A 131-amino-acid chain; its full sequence is Global transcriptional regulator Spx (131 aa).

An intrachain disulfide couples C10 to C13.

This sequence belongs to the ArsC family. Spx subfamily. In terms of assembly, interacts with the C-terminal domain of the alpha subunit of the RNAP.

Its subcellular location is the cytoplasm. Its function is as follows. Global transcriptional regulator that plays a key role in stress response and exerts either positive or negative regulation of genes. Acts by interacting with the C-terminal domain of the alpha subunit of the RNA polymerase (RNAP). This interaction can enhance binding of RNAP to the promoter region of target genes and stimulate their transcription, or block interaction of RNAP with activator. The protein is Global transcriptional regulator Spx of Shouchella clausii (strain KSM-K16) (Alkalihalobacillus clausii).